Here is a 200-residue protein sequence, read N- to C-terminus: Orotate phosphoribosyltransferase (200 aa).

5-phospho-alpha-D-ribose 1-diphosphate is bound by residues Arg-95, Lys-99, His-101, and 121 to 129 (DDVATTGGS). The orotate site is built by Thr-125 and Arg-153.

This sequence belongs to the purine/pyrimidine phosphoribosyltransferase family. PyrE subfamily. Homodimer. It depends on Mg(2+) as a cofactor.

It catalyses the reaction orotidine 5'-phosphate + diphosphate = orotate + 5-phospho-alpha-D-ribose 1-diphosphate. It functions in the pathway pyrimidine metabolism; UMP biosynthesis via de novo pathway; UMP from orotate: step 1/2. In terms of biological role, catalyzes the transfer of a ribosyl phosphate group from 5-phosphoribose 1-diphosphate to orotate, leading to the formation of orotidine monophosphate (OMP). The sequence is that of Orotate phosphoribosyltransferase from Cenarchaeum symbiosum (strain A).